Reading from the N-terminus, the 1523-residue chain is Slit homolog 3 protein (1523 aa).

Residues Met1 to Ala33 form the signal peptide. The region spanning Cys34–Arg61 is the LRRNT domain. 6 LRR repeats span residues Asn62–Gly83, Asn86–Asp107, Gln110–Ser131, Lys134–Gly155, Gly158–Ala179, and Asp182–His203. N-linked (GlcNAc...) asparagine glycosylation occurs at Asn72. Asn192 carries N-linked (GlcNAc...) asparagine glycosylation. An LRRCT 1 domain is found at Asn215–Gly265. An LRRNT 2 domain is found at Pro271–Glu307. The cysteines at positions 284 and 293 are disulfide-linked. LRR repeat units follow at residues Gly308–Gln329, Lys332–Gly353, Ser356–Gly377, Ser380–Asp401, and Asn404–Pro425. The LRRCT 2 domain maps to Asn437 to Gly487. Disulfide bonds link Cys441–Cys464, Cys443–Cys485, Cys505–Cys511, and Cys509–Cys518. The LRRNT 3 domain maps to Ser496–Glu532. LRR repeat units lie at residues Tyr533–Lys554, Asn558–Gly579, Gly582–Gly603, Gly606–Gly627, and Ser630–Thr651. Residue Asn563 is glycosylated (N-linked (GlcNAc...) asparagine). A glycan (N-linked (GlcNAc...) asparagine) is linked at Asn622. The LRRCT 3 domain occupies Asn663–Gly713. Cystine bridges form between Cys667-Cys690 and Cys669-Cys711. The region spanning Glu716–Lys752 is the LRRNT 4 domain. LRR repeat units follow at residues Asp753 to Phe774, Gln776 to Asn797, His800 to Gly821, and Ser824 to Asp845. Residues Asn784, Asn792, and Asn797 are each glycosylated (N-linked (GlcNAc...) asparagine). Positions Asn857–Gly907 constitute an LRRCT 4 domain. EGF-like domains lie at Asn918–Thr953, Pro955–Glu994, Asn996–Asp1032, Val1034–Glu1072, Asp1074–Glu1110, and Gln1119–Glu1155. 18 disulfides stabilise this stretch: Cys920–Cys931, Cys925–Cys941, Cys943–Cys952, Cys959–Cys970, Cys964–Cys982, Cys984–Cys993, Cys1000–Cys1011, Cys1005–Cys1020, Cys1022–Cys1031, Cys1038–Cys1051, Cys1045–Cys1060, Cys1062–Cys1071, Cys1078–Cys1089, Cys1083–Cys1098, Cys1100–Cys1109, Cys1123–Cys1134, Cys1128–Cys1143, and Cys1145–Cys1154. The N-linked (GlcNAc...) asparagine glycan is linked to Asn928. The N-linked (GlcNAc...) asparagine glycan is linked to Asn1025. Positions Ile1158–Cys1332 constitute a Laminin G-like domain. Asn1181 and Asn1247 each carry an N-linked (GlcNAc...) asparagine glycan. 5 cysteine pairs are disulfide-bonded: Cys1305–Cys1332, Cys1355–Cys1364, Cys1372–Cys1382, Cys1377–Cys1391, and Cys1393–Cys1402. 2 EGF-like domains span residues His1340–Asp1365 and Ala1368–Asp1403. A glycan (N-linked (GlcNAc...) asparagine) is linked at Asn1406. The region spanning Ser1408–Glu1444 is the EGF-like 9 domain. Cystine bridges form between Cys1412/Cys1422, Cys1417/Cys1432, Cys1434/Cys1443, Cys1449/Cys1487, Cys1467/Cys1501, Cys1478/Cys1517, and Cys1482/Cys1519. The CTCK domain maps to Cys1449–Ser1523.

It localises to the secreted. Functionally, may act as molecular guidance cue in cellular migration, and function may be mediated by interaction with roundabout homolog receptors. The protein is Slit homolog 3 protein (Slit3) of Rattus norvegicus (Rat).